Consider the following 1072-residue polypeptide: MLGDGKEGTSTIPGFNQIQFEGFYRFIDQGLIEELSKFPKIEDIDHEIEFQLFVETYQLVEPLIKERNAVYESLTYSSELYVSAGLIWKTSRNMQEQRIFIGNIPLMNSLGTSIVNGIYRIVINQILQSPGIYYQSELDHNGISVYTGTIISDWGGRLELEIDKKARIWARVSRKQKISILVLSSAMGSNLREILENVSYPEIFLSFLTDKEKKKIGSKENAILEFYQQFSCVGGDPIFSESLCKELQKKFFHQRCELGRIGRRNINWRLNLNIPQNNIFLLPRDILAAADHLIGMKFGMGTLDDMNHLKNKRIRSVADLLQDQLGLALARLENVVKGTISGAIRHKLIPTPQNLVTSTPLTTTYESFFGLHPLSQVLDRTNPLTQIVHGRKLSYLGPGGLTGRTANFRIRDIHPSHYGRICPIDTSEGINVGLIGSLSIHARIGDWGSLESPFYELFEKSKKARIRMLFLSPSQDEYYMIAAGNSLALNRGIQEEQAVPARYRQEFLTIAWEEVHLRSIFPFQYFSIGASLIPFIEHNDANRALMSSNMQRQAVPLSRSEKCIVGTGLERQVALDSGVPAIAEHEGKILYTDTEKIVLSGSGDTLTIPLIMYQRSNKNTCMHQKPQVRRGKCIKKGQILADGAATVGGELALGKNILVAYMPWEGYNFEDAVLISECLVYGDIYTSFHIRKYEIQTHVTTQGPERITKEIPHLEGRLLRNLDKNGIVMLGSWVETGDILVGKLTPQVAKESSYAPEDRLLRAILGIQVSTSKETCLKLPIGGRGRVIDVRWVQKKGGSSYNPEIIRVYISQKREIKVGDKVAGRHGNKGIISKILPRQDMPYLQDGRPVDMVFNPLGVPSRMNVGQIFECSLGLAGSLLDRHYRIAPFDERYEQEASRKLVFSELYEASKQTANPWVFEPEYPGKSRIFDGRTGDPFEQPVIIGKPYILKLIHQVDDKIHGRSSGHYALVTQQPLRGRSKQGGQRVGEMEVWALEGFGVAHILQEMLTYKSDHIRARQEVLGTTIIGGTIPKPEDAPESFRLLVRELRSLALELNHFFVSEKNFQINRKEV.

Belongs to the RNA polymerase beta chain family. In plastids the minimal PEP RNA polymerase catalytic core is composed of four subunits: alpha, beta, beta', and beta''. When a (nuclear-encoded) sigma factor is associated with the core the holoenzyme is formed, which can initiate transcription.

It is found in the plastid. The protein localises to the chloroplast. It catalyses the reaction RNA(n) + a ribonucleoside 5'-triphosphate = RNA(n+1) + diphosphate. Functionally, DNA-dependent RNA polymerase catalyzes the transcription of DNA into RNA using the four ribonucleoside triphosphates as substrates. The chain is DNA-directed RNA polymerase subunit beta from Olimarabidopsis pumila (Dwarf rocket).